A 306-amino-acid chain; its full sequence is Recombination-associated protein RdgC (306 aa).

Belongs to the RdgC family.

The protein localises to the cytoplasm. Its subcellular location is the nucleoid. Functionally, may be involved in recombination. This Pseudomonas fluorescens (strain SBW25) protein is Recombination-associated protein RdgC.